A 216-amino-acid polypeptide reads, in one-letter code: MITVALAKGALLKDSVTRFAKAGLDFSAVLDPSNRQLMVPSECGRAKALLVRNGDVPVYVAYGQAQLGVVGFDVLSEHQMPVANLVDLSFGECHMAVAVKETSHYRSAADLPAHCRVASKFTNCARRFFEDIDLPVELVHLTGSVELGPLTGMAEAIVDLVATGRTLRENGLIEIDHLFDSTARLIGHPLSLRLDSGDLRSVVEAMNTNDKSIPFK.

This sequence belongs to the ATP phosphoribosyltransferase family. Short subfamily. Heteromultimer composed of HisG and HisZ subunits.

It localises to the cytoplasm. The enzyme catalyses 1-(5-phospho-beta-D-ribosyl)-ATP + diphosphate = 5-phospho-alpha-D-ribose 1-diphosphate + ATP. It functions in the pathway amino-acid biosynthesis; L-histidine biosynthesis; L-histidine from 5-phospho-alpha-D-ribose 1-diphosphate: step 1/9. Its function is as follows. Catalyzes the condensation of ATP and 5-phosphoribose 1-diphosphate to form N'-(5'-phosphoribosyl)-ATP (PR-ATP). Has a crucial role in the pathway because the rate of histidine biosynthesis seems to be controlled primarily by regulation of HisG enzymatic activity. In Prochlorococcus marinus (strain MIT 9211), this protein is ATP phosphoribosyltransferase.